Here is a 363-residue protein sequence, read N- to C-terminus: MIEHGNSTFDYRSIREVAANAGAGATAGAIAATFVCPLDVIKTRLQVLGLPEAPASGQRGGVIITSLKNIIKEEGYRGMYRGLSPTIIALLPNWAVYFSVYGKLKDVLQSSDGKLSIGSNMIAAAGAGAATSIATNPLWVVKTRLMTQGIRPGVVPYKSVMSAFSRICHEEGVRGLYSGILPSLAGVSHVAIQFPAYEKIKQYMAKMDNTSVENLSPGNVAIASSIAKVIASILTYPHEVIRAKLQEQGQIRNAETKYSGVIDCITKVFRSEGIPGLYRGCATNLLRTTPSAVITFTTYEMMLRFFRQVVPPETNRSDDRRREEERKNLVSRRGEEEDKDLGLRESQTQSNKISTPHIPLGSK.

3 Solcar repeats span residues 15 to 107, 115 to 203, and 215 to 305; these read REVA…LKDV, LSIG…IKQY, and LSPG…MLRF. 6 consecutive transmembrane segments (helical) span residues 21 to 41, 82 to 102, 121 to 141, 176 to 196, 215 to 235, and 277 to 299; these read AGAG…LDVI, GLSP…SVYG, MIAA…LWVV, LYSG…QFPA, LSPG…SILT, and LYRG…FTTY. The tract at residues 313–363 is disordered; the sequence is ETNRSDDRRREEERKNLVSRRGEEEDKDLGLRESQTQSNKISTPHIPLGSK. The span at 315-343 shows a compositional bias: basic and acidic residues; the sequence is NRSDDRRREEERKNLVSRRGEEEDKDLGL. Residues 345-354 show a composition bias toward polar residues; sequence ESQTQSNKIS.

This sequence belongs to the mitochondrial carrier (TC 2.A.29) family. Highly expressed in young meristematic shoot area, vascular bundles of leaves, developing siliques including the funiculi, petal veins, developing pollen and central cylinder of roots.

The protein localises to the mitochondrion membrane. Its activity is regulated as follows. Inhibited by pyridoxal 5'-phosphate, bathophenanthroline, tannic acid, mersalyl, mercuric chloride, p-hydroxymercuribenzoate, p-hydroxymercuribenzoate sulfonate, bromocresol purple and N-ethylmaleimide. Functionally, mediates the NAD(+) import into chloroplast. Favors the NAD(+)(in)/ADP or AMP(out) antiport exchange, but is also able to catalyze a low unidirectional transport (uniport) of NAD(+). Transports NAD(+), nicotinic acid adenine dinucleotide, nicotinamide mononucleotide, nicotinic acid mononucleotide, FAD, FMN, TTP, TDP, TMP, UTP, UDP, UMP, CTP, CDP, CMP, GTP, GDP, GMP, 3'-AMP, ATP, ADP and AMP, has low transport activity with cAMP, NADH and alpha-NAD(+), and has no activity with NADP(+), NADPH, nicotinamide, nicotinic acid, adenosine, thiamine mono- or diphosphate, inorganic phosphate, CoA, folate, NaCl, malate, malonate, citrate, fumarate, aspartate, glutamate, S-adenosylmethionine, lysine, arginine, and ornithine. The protein is Nicotinamide adenine dinucleotide transporter 2, mitochondrial (NDT2) of Arabidopsis thaliana (Mouse-ear cress).